The chain runs to 170 residues: Protein SprT (170 aa).

The region spanning 23 to 164 (QLARQHFSVE…CRQCGDKLKF (142 aa)) is the SprT-like domain. His78 lines the Zn(2+) pocket. Residue Glu79 is part of the active site. His82 lines the Zn(2+) pocket.

It belongs to the SprT family. It depends on Zn(2+) as a cofactor.

Its subcellular location is the cytoplasm. The protein is Protein SprT of Serratia proteamaculans (strain 568).